Here is a 778-residue protein sequence, read N- to C-terminus: Serine/threonine-protein kinase BRSK1 (778 aa).

The span at 1–12 shows a compositional bias: gly residues; it reads MSSGSKEGGGGS. Residues 1-29 are disordered; that stretch reads MSSGSKEGGGGSPAYHLPHPHPHPPQHAQ. The Protein kinase domain maps to 34–285; the sequence is YRLEKTLGKG…LEQIQKHPWY (252 aa). Residues 40-48 and K63 contribute to the ATP site; that span reads LGKGQTGLV. D156 acts as the Proton acceptor in catalysis. The residue at position 189 (T189) is a Phosphothreonine; by LKB1. Positions 314–356 constitute a UBA domain; sequence ELDPDVLESMASLGCFRDRERLHRELRSEEENQEKMIYYLLLD. Over residues 362 to 383 the composition is skewed to basic and acidic residues; sequence PSCEDQDLPPRNDVDPPRKRVD. The segment at 362–548 is disordered; that stretch reads PSCEDQDLPP…SPGGGVGGAA (187 aa). S399, S443, S447, and S450 each carry phosphoserine. The span at 430-457 shows a compositional bias: low complexity; the sequence is SRSVSGASTGLSSSPLSSPRSPVFSFSP. An omega-N-methylarginine mark is found at R466, R481, R484, and R498. Over residues 491–508 the composition is skewed to pro residues; sequence QPPPPSARSTPLPGPPGS. S508 is modified (phosphoserine). Low complexity predominate over residues 509 to 533; the sequence is PRSSGGTPLHSPLHTPRASPTGTPG. R525 bears the Omega-N-methylarginine mark. A phosphothreonine mark is found at T529 and T535. The residue at position 550 (R550) is an Omega-N-methylarginine. Residues 560 to 588 form a disordered region; that stretch reads FLGSPRFHRRKMQVPTAEEMSSLTPESSP. The residue at position 583 (T583) is a Phosphothreonine. Phosphoserine occurs at positions 586, 587, and 601. The disordered stretch occupies residues 719 to 778; that stretch reads QPSVQALADEKNGAQTRPAGTPPRSLQPPPGRSDPDLSSSPRRGPPKDKKLLATNGTPLP.

The protein belongs to the protein kinase superfamily. CAMK Ser/Thr protein kinase family. SNF1 subfamily. Mg(2+) is required as a cofactor. Post-translationally, phosphorylated at Thr-189 by STK11/LKB1 in complex with STE20-related adapter-alpha (STRADA) pseudo kinase and CAB39. Not phosphorylated at Thr-189 by CaMKK2. In contrast, it is phosphorylated and activated by CaMKK1. May be inactivated via dephosphorylation of Thr-189 by PP2C. In terms of tissue distribution, present in the gray matter of the brain and spinal cord (at protein level). Expressed in the nervous system, distributed within the brain and spinal cord of embryonic and postnatal animals.

Its subcellular location is the cytoplasm. The protein resides in the nucleus. It localises to the cytoskeleton. It is found in the microtubule organizing center. The protein localises to the centrosome. Its subcellular location is the synapse. The protein resides in the presynaptic active zone. It localises to the cytoplasmic vesicle. It is found in the secretory vesicle. The protein localises to the synaptic vesicle. It carries out the reaction L-seryl-[protein] + ATP = O-phospho-L-seryl-[protein] + ADP + H(+). The enzyme catalyses L-threonyl-[protein] + ATP = O-phospho-L-threonyl-[protein] + ADP + H(+). It catalyses the reaction L-seryl-[tau protein] + ATP = O-phospho-L-seryl-[tau protein] + ADP + H(+). The catalysed reaction is L-threonyl-[tau protein] + ATP = O-phospho-L-threonyl-[tau protein] + ADP + H(+). With respect to regulation, activated by phosphorylation on Thr-189 by STK11/LKB1. Its function is as follows. Serine/threonine-protein kinase that plays a key role in polarization of neurons and centrosome duplication. Phosphorylates CDC25B, CDC25C, MAPT/TAU, RIMS1, TUBG1, TUBG2 and WEE1. Following phosphorylation and activation by STK11/LKB1, acts as a key regulator of polarization of cortical neurons, probably by mediating phosphorylation of microtubule-associated proteins such as MAPT/TAU at 'Thr-504' and 'Ser-554'. Also regulates neuron polarization by mediating phosphorylation of WEE1 at 'Ser-642' in postmitotic neurons, leading to down-regulate WEE1 activity in polarized neurons. In neurons, localizes to synaptic vesicles and plays a role in neurotransmitter release, possibly by phosphorylating RIMS1. Also acts as a positive regulator of centrosome duplication by mediating phosphorylation of gamma-tubulin (TUBG1 and TUBG2) at 'Ser-131', leading to translocation of gamma-tubulin and its associated proteins to the centrosome. Involved in the UV-induced DNA damage checkpoint response, probably by inhibiting CDK1 activity through phosphorylation and activation of WEE1, and inhibition of CDC25B and CDC25C. The chain is Serine/threonine-protein kinase BRSK1 (Brsk1) from Mus musculus (Mouse).